The following is a 1185-amino-acid chain: DNA-directed RNA polymerase subunit beta' (1185 aa).

4 residues coordinate Zn(2+): Cys67, Cys69, Cys82, and Cys85. Mg(2+) is bound by residues Asp457, Asp459, and Asp461. Residues Cys802, Cys876, Cys883, and Cys886 each coordinate Zn(2+).

It belongs to the RNA polymerase beta' chain family. In terms of assembly, the RNAP catalytic core consists of 2 alpha, 1 beta, 1 beta' and 1 omega subunit. When a sigma factor is associated with the core the holoenzyme is formed, which can initiate transcription. Mg(2+) serves as cofactor. Zn(2+) is required as a cofactor.

It carries out the reaction RNA(n) + a ribonucleoside 5'-triphosphate = RNA(n+1) + diphosphate. Its function is as follows. DNA-dependent RNA polymerase catalyzes the transcription of DNA into RNA using the four ribonucleoside triphosphates as substrates. In Clostridium novyi (strain NT), this protein is DNA-directed RNA polymerase subunit beta'.